The following is a 432-amino-acid chain: Adenylosuccinate synthetase (432 aa).

Residues 13 to 19 and 41 to 43 contribute to the GTP site; these read GDEGKGK and GHT. D14 (proton acceptor) is an active-site residue. Mg(2+) is bound by residues D14 and G41. IMP is bound by residues 14 to 17, 39 to 42, T130, R144, Q225, T240, and R304; these read DEGK and NAGH. H42 acts as the Proton donor in catalysis. 300–306 contacts substrate; it reads ATTGRRR. Residues R306, 332 to 334, and 415 to 417 contribute to the GTP site; these read KLD and STG.

The protein belongs to the adenylosuccinate synthetase family. Homodimer. It depends on Mg(2+) as a cofactor.

The protein resides in the cytoplasm. It carries out the reaction IMP + L-aspartate + GTP = N(6)-(1,2-dicarboxyethyl)-AMP + GDP + phosphate + 2 H(+). The protein operates within purine metabolism; AMP biosynthesis via de novo pathway; AMP from IMP: step 1/2. In terms of biological role, plays an important role in the de novo pathway of purine nucleotide biosynthesis. Catalyzes the first committed step in the biosynthesis of AMP from IMP. This Sodalis glossinidius (strain morsitans) protein is Adenylosuccinate synthetase.